Consider the following 63-residue polypeptide: Large ribosomal subunit protein bL28 (63 aa).

This sequence belongs to the bacterial ribosomal protein bL28 family.

The protein is Large ribosomal subunit protein bL28 of Treponema denticola (strain ATCC 35405 / DSM 14222 / CIP 103919 / JCM 8153 / KCTC 15104).